Consider the following 282-residue polypeptide: Deoxyribonuclease-1 (282 aa).

A signal peptide spans 1 to 22 (MRGTRLMGLLLALAGLLQLGLS). Asparagine 40 carries N-linked (GlcNAc...) asparagine glycosylation. Glutamate 100 is an active-site residue. An intrachain disulfide couples cysteine 123 to cysteine 126. Histidine 156 is a catalytic residue. A disulfide bond links cysteine 195 and cysteine 231.

This sequence belongs to the DNase I family. It depends on Ca(2+) as a cofactor. Mg(2+) serves as cofactor. In terms of processing, the only differences between the A and B forms and the C and D forms are in the compositions of the carbohydrate bound to Asn-40.

It localises to the secreted. The protein localises to the zymogen granule. The protein resides in the nucleus envelope. It catalyses the reaction Endonucleolytic cleavage to 5'-phosphodinucleotide and 5'-phosphooligonucleotide end-products.. Its function is as follows. Serum endocuclease secreted into body fluids by a wide variety of exocrine and endocrine organs. Expressed by non-hematopoietic tissues and preferentially cleaves protein-free DNA. Among other functions, seems to be involved in cell death by apoptosis. Binds specifically to G-actin and blocks actin polymerization. Together with DNASE1L3, plays a key role in degrading neutrophil extracellular traps (NETs). NETs are mainly composed of DNA fibers and are released by neutrophils to bind pathogens during inflammation. Degradation of intravascular NETs by DNASE1 and DNASE1L3 is required to prevent formation of clots that obstruct blood vessels and cause organ damage following inflammation. This chain is Deoxyribonuclease-1 (DNASE1), found in Bos taurus (Bovine).